The primary structure comprises 303 residues: Ribosomal RNA small subunit methyltransferase H (303 aa).

S-adenosyl-L-methionine is bound by residues 33–35 (GGH), Asp52, Phe78, Asp99, and Gln106.

Belongs to the methyltransferase superfamily. RsmH family.

It localises to the cytoplasm. It catalyses the reaction cytidine(1402) in 16S rRNA + S-adenosyl-L-methionine = N(4)-methylcytidine(1402) in 16S rRNA + S-adenosyl-L-homocysteine + H(+). Specifically methylates the N4 position of cytidine in position 1402 (C1402) of 16S rRNA. This Phytoplasma australiense protein is Ribosomal RNA small subunit methyltransferase H.